Consider the following 422-residue polypeptide: Cytochrome P450-pinF1, plant-inducible (422 aa).

C369 lines the heme pocket.

The protein belongs to the cytochrome P450 family. The cofactor is heme.

Functionally, not essential for virulence, but may be involved in the detoxification of plant protective agents at the site of wounding. The sequence is that of Cytochrome P450-pinF1, plant-inducible (cyp103) from Rhizobium radiobacter (Agrobacterium tumefaciens).